The primary structure comprises 202 residues: MNSFRSFSMQCVQSTTTWDSTTIRRIPYYRDEPEYDTETKLEFIRLFFNSLTNQFSKRTFTRNENKQPFESEMVNQFNDSKLKLNYCLKLVRNNFLCETGKFQLSIKARKCIGYNEDSRLDAVIFQTSDFRRKVIFKEEVANYEFTPSLVNESIKIKNECEDLTLLLNERRLVLNQNPILLSQLIDLASIIKNEKHEYNAFK.

This is an uncharacterized protein from Dictyostelium discoideum (Social amoeba).